We begin with the raw amino-acid sequence, 410 residues long: MSGATKDVKKVVLAYSGGLDTSVILKWLQETYGCEVVTFTADLGQGEELEPARKKAEMLGVKEIYIEDLREEFVRDFVFPMFRANAVYEGVYLLGTSIARPLIAKRQIEIARQTGADAVCHGSTGKGNDQVRFELGYAALNPEIKIIAPWREWDLTSRTKLIEFAEKHQIPIAKDKRGEAPFSVDANLLHISAEGKVLEDPADEAPEYVYSRSVRPEDAPDTPTYVEVGFEKGDAVSIDGVKMSPATLLTKLNELGGANGIGRLDLVENRFVGMKSRGVYETPGGTVLLVAHRAMESITLDRGAAHLKDELMPRYAELIYNGFWWSPEREMLQALIDKSQEMVTGSVRLKLYKGMATVVGRSSPYSLYSMAHVTFEEDAGAYDQKDAAGFIRLNALRLRLLAARNNRTKK.

Residues 14–22 (AYSGGLDTS) and Ala-41 contribute to the ATP site. Residues Tyr-92 and Ser-97 each coordinate L-citrulline. An ATP-binding site is contributed by Gly-122. Thr-124, Asn-128, and Asp-129 together coordinate L-aspartate. L-citrulline is bound at residue Asn-128. Arg-132, Ser-183, Ser-192, Glu-268, and Tyr-280 together coordinate L-citrulline.

This sequence belongs to the argininosuccinate synthase family. Type 1 subfamily. In terms of assembly, homotetramer.

The protein localises to the cytoplasm. The enzyme catalyses L-citrulline + L-aspartate + ATP = 2-(N(omega)-L-arginino)succinate + AMP + diphosphate + H(+). The protein operates within amino-acid biosynthesis; L-arginine biosynthesis; L-arginine from L-ornithine and carbamoyl phosphate: step 2/3. The sequence is that of Argininosuccinate synthase from Parvibaculum lavamentivorans (strain DS-1 / DSM 13023 / NCIMB 13966).